The sequence spans 183 residues: Translocon-associated protein subunit beta (183 aa).

The first 17 residues, 1–17, serve as a signal peptide directing secretion; sequence MRLLAFAVLALFAVTQA. Topologically, residues 18–146 are lumenal; the sequence is EEGARLLASK…REFDRRFSPH (129 aa). A glycan (N-linked (GlcNAc...) asparagine) is linked at Asn88. The helical transmembrane segment at 147–167 threads the bilayer; it reads FLDWAAFGVMTLPSIGVPLLL. Topologically, residues 168–183 are cytoplasmic; that stretch reads WYSSKRKYDTPKTKKN.

The protein belongs to the TRAP-beta family. In terms of assembly, heterotetramer of TRAP-alpha, TRAP-beta, TRAP-delta and TRAP-gamma. Interacts with STING1.

Its subcellular location is the endoplasmic reticulum membrane. In terms of biological role, TRAP proteins are part of a complex whose function is to bind calcium to the ER membrane and thereby regulate the retention of ER resident proteins. The sequence is that of Translocon-associated protein subunit beta (SSR2) from Bos taurus (Bovine).